The chain runs to 892 residues: Nitrogen assimilation transcription factor nirA (892 aa).

Positions 1 to 32 (MGEKLDPELSSDGPHTKSSSKGQGTSTDNAPA) are disordered. Positions 16 to 27 (TKSSSKGQGTST) are enriched in low complexity. The segment at residues 42-70 (CIACRRRKSKCDGNLPSCAACSSVYHTTC) is a DNA-binding region (zn(2)-C6 fungal-type). Disordered stretches follow at residues 646-714 (GPWD…SGPV), 731-761 (AHNE…SAQE), and 842-892 (PNIP…SFQR). Positions 649-674 (DQAASPSTTSDSPPSVSSQSVVATTD) are enriched in low complexity. Polar residues-rich tracts occupy residues 675–714 (LSQP…SGPV), 746–761 (VSTS…SAQE), and 876–892 (NVNS…SFQR).

It localises to the nucleus. Its function is as follows. Pathway-specific regulatory gene of nitrate assimilation; it activates the transcription of the genes for nitrate and nitrite reductases (niaD and niiA). This chain is Nitrogen assimilation transcription factor nirA (nirA), found in Emericella nidulans (strain FGSC A4 / ATCC 38163 / CBS 112.46 / NRRL 194 / M139) (Aspergillus nidulans).